We begin with the raw amino-acid sequence, 45 residues long: Large ribosomal subunit protein bL34 (45 aa).

It belongs to the bacterial ribosomal protein bL34 family.

This chain is Large ribosomal subunit protein bL34 (rpmH), found in Streptomyces bikiniensis.